Reading from the N-terminus, the 1390-residue chain is General transcriptional corepressor trfA (1390 aa).

The interval 53–143 (QQQQQHQQHQ…QQQQQQQQQQ (91 aa)) is disordered. TPR repeat units follow at residues 171–204 (ESIW…NPFS), 206–238 (KALT…ESKN), 239–272 (GEVW…LPNP), 275–308 (PNLW…DNKF), 312–345 (TEIY…PPLP), 349–382 (SDIW…NATH), 384–419 (KVLQ…DSSD), 420–453 (AQTW…DGRN), 454–487 (PTFW…NPFL), and 489–521 (EVWY…DPHN). 3 disordered regions span residues 539–596 (PIGK…NSFV), 632–938 (ERGR…YNNI), and 958–1390 (LDEE…KLER). The span at 540–557 (IGKDGYDLQNGEHGEHGG) shows a compositional bias: basic and acidic residues. The span at 582–593 (QNNRNGNNNGNN) shows a compositional bias: low complexity. The segment covering 632–641 (ERGRGEDMHN) has biased composition (basic and acidic residues). Positions 644–744 (HSQYSNSMSM…MNDNVNSKNN (101 aa)) are enriched in low complexity. Over residues 745-803 (DVLDRRYKGILEREKTSPNGDGRDNRDNIRDNRDNRDSRDGRDNRDGRDSRDRIQEYTR) the composition is skewed to basic and acidic residues. Positions 805–846 (YNNNNNNNNSISSINNNNNNNNNNYNNNNNNNNNNNNNNNNN) are enriched in low complexity. The span at 857–871 (HNDRRSYERDNKERI) shows a compositional bias: basic and acidic residues. Composition is skewed to low complexity over residues 872 to 898 (NNNN…NNNN) and 917 to 937 (NNSN…NYNN). 4 stretches are compositionally biased toward basic and acidic residues: residues 977-993 (KEAE…KERS), 1000-1029 (EKPD…EKES), 1037-1099 (KEIE…EKES), and 1120-1135 (TKKD…EKKL). Residues 1136–1146 (SSVSPTTTAVE) are compositionally biased toward polar residues. Positions 1147-1169 (QSRDETKELEMDTKEDSEKEKKS) are enriched in basic and acidic residues. 2 stretches are compositionally biased toward low complexity: residues 1170 to 1180 (STTTTAAASES) and 1192 to 1203 (TTTTTTTTNTTT). The span at 1206 to 1218 (PTHKDKESSKNDD) shows a compositional bias: basic and acidic residues. A compositionally biased stretch (low complexity) spans 1219-1228 (TTTTTTTTTT). Positions 1229–1239 (KSAKSPNSSPT) are enriched in polar residues. Positions 1240–1263 (RSDEVVEPHQDASQEEINKRKLED) are enriched in basic and acidic residues. 2 stretches are compositionally biased toward low complexity: residues 1277-1289 (STPS…STPS) and 1315-1337 (SSSS…TNSS). Basic and acidic residues predominate over residues 1339-1374 (KNERDRDRERERERERDREREREREREREREREKNK).

Belongs to the CYC8/SSN6 family. As to quaternary structure, associates with tupA to form the trfA-tupA corepressor complex.

It localises to the nucleus. Acts as a component of the trfA-tupA corepressor complex which is involved in the repression of many genes in a wide variety of physiological processes. May also be involved in the derepression of at least some target genes. The complex is recruited to target genes by interaction with DNA-bound transcriptional repressors. The complex recruits histone deacetylases to produce a repressive chromatin structure, interacts with hypoacetylated N-terminal tails of histones H3 and H4 that have been programmed for repression by the action of histone deacetylases and interferes directly with the transcriptional machinery by associating with the RNA polymerase II mediator complex. Required for normal growth and for aggregation in early development. Required for a proper chemotactic response to cAMP. The chain is General transcriptional corepressor trfA (trfA) from Dictyostelium discoideum (Social amoeba).